A 547-amino-acid polypeptide reads, in one-letter code: Chaperonin GroEL (547 aa).

ATP is bound by residues 30–33 (TLGP), lysine 51, 87–91 (DGTTT), glycine 415, 479–481 (NAA), and aspartate 495.

It belongs to the chaperonin (HSP60) family. In terms of assembly, forms a cylinder of 14 subunits composed of two heptameric rings stacked back-to-back. Interacts with the co-chaperonin GroES.

The protein localises to the cytoplasm. The catalysed reaction is ATP + H2O + a folded polypeptide = ADP + phosphate + an unfolded polypeptide.. Functionally, together with its co-chaperonin GroES, plays an essential role in assisting protein folding. The GroEL-GroES system forms a nano-cage that allows encapsulation of the non-native substrate proteins and provides a physical environment optimized to promote and accelerate protein folding. The chain is Chaperonin GroEL from Pseudomonas syringae pv. syringae (strain B728a).